Consider the following 159-residue polypeptide: Regulatory protein RecX (159 aa).

Belongs to the RecX family.

The protein localises to the cytoplasm. Its function is as follows. Modulates RecA activity. The protein is Regulatory protein RecX of Acinetobacter baylyi (strain ATCC 33305 / BD413 / ADP1).